The sequence spans 105 residues: Synaptic plasticity regulator PANTS (105 aa).

The protein belongs to the UPF0545 family. As to quaternary structure, interacts with RTN4 isoform A/Nogo-A; the interaction results in enhanced RTN4-mediated inhibition of AMPA receptor clustering. Also interacts with NCAM1, RANBP2 and CCT8. In terms of processing, rapidly degraded by proteolysis following neuronal stimulation, resulting in increased AMPA receptor clustering.

The protein localises to the synapse. It is found in the synaptic cleft. Its function is as follows. Negatively regulates long-term potentiation and modulates adult synaptic plasticity. Stabilizes the interaction of RTN4 isoform A/Nogo-A with its receptors, inhibiting clustering of postsynaptic AMPA receptors at synaptic sites. Upon neuronal stimulation, degraded at synapses, reducing RTN4 signaling and allowing AMPA receptor clustering at individual synapses. This Homo sapiens (Human) protein is Synaptic plasticity regulator PANTS (C22orf39).